A 286-amino-acid polypeptide reads, in one-letter code: Beta-lactamase SHV-1 (286 aa).

The N-terminal stretch at 1–21 (MRYIRLCIISLLATLPLAVHA) is a signal peptide. The active-site Acyl-ester intermediate is the Ser66. A disulfide bridge links Cys73 with Cys119. The active-site Proton acceptor is the Glu164. Residue 230–232 (KTG) coordinates substrate.

It belongs to the class-A beta-lactamase family.

The catalysed reaction is a beta-lactam + H2O = a substituted beta-amino acid. The sequence is that of Beta-lactamase SHV-1 (bla) from Escherichia coli.